Consider the following 524-residue polypeptide: Phosphoenolpyruvate carboxykinase (ATP) (524 aa).

Residues R52, Y188, and K194 each contribute to the substrate site. ATP-binding positions include K194, H213, and G229–T237. Positions 194 and 213 each coordinate Mn(2+). D250 contacts Mn(2+). Residues E278, R314, and T439 each contribute to the ATP site. R314 is a substrate binding site.

Belongs to the phosphoenolpyruvate carboxykinase (ATP) family. The cofactor is Mn(2+).

It localises to the cytoplasm. It carries out the reaction oxaloacetate + ATP = phosphoenolpyruvate + ADP + CO2. Its pathway is carbohydrate biosynthesis; gluconeogenesis. Functionally, involved in the gluconeogenesis. Catalyzes the conversion of oxaloacetate (OAA) to phosphoenolpyruvate (PEP) through direct phosphoryl transfer between the nucleoside triphosphate and OAA. The polypeptide is Phosphoenolpyruvate carboxykinase (ATP) (Campylobacter jejuni subsp. doylei (strain ATCC BAA-1458 / RM4099 / 269.97)).